The following is a 428-amino-acid chain: Beta-1,3-galactosyl-O-glycosyl-glycoprotein beta-1,6-N-acetylglucosaminyltransferase (428 aa).

Residues Met-1 to Arg-9 lie on the Cytoplasmic side of the membrane. The mediates interaction with GOLPH3 and is necessary and sufficient for localization to the Golgi stretch occupies residues Leu-5–Arg-9. A helical; Signal-anchor for type II membrane protein transmembrane segment spans residues Leu-10–Leu-32. The segment at Arg-33 to Phe-121 is stem region. Residues Arg-33 to His-428 are Lumenal-facing. N-linked (GlcNAc...) asparagine glycosylation is found at Asn-58 and Asn-95. Intrachain disulfides connect Cys-59-Cys-413, Cys-100-Cys-172, Cys-151-Cys-199, and Cys-372-Cys-381. Residues Pro-122 to His-428 are catalytic. UDP-N-acetyl-alpha-D-glucosamine is bound by residues Val-128–His-130, Asp-155–Lys-157, and Tyr-187. Residues Glu-243, Lys-251, Arg-254, Glu-320, Lys-341, and Tyr-358 each contribute to the a glycoprotein site. Residue Glu-320 is the Nucleophile of the active site. Residues Arg-378 and Lys-401 each coordinate UDP-N-acetyl-alpha-D-glucosamine.

This sequence belongs to the glycosyltransferase 14 family. In terms of assembly, interacts with GOLPH3; may control GCNT1 retention in the Golgi. In terms of tissue distribution, highly expressed in activated T-lymphocytes and myeloid cells.

The protein resides in the golgi apparatus membrane. It catalyses the reaction a 3-O-[beta-D-galactosyl-(1-&gt;3)-N-acetyl-alpha-D-galactosaminyl]-L-seryl-[protein] + UDP-N-acetyl-alpha-D-glucosamine = 3-O-{beta-D-galactosyl-(1-&gt;3)-[N-acetyl-beta-D-glucosaminyl-(1-&gt;6)]-N-acetyl-alpha-D-galactosaminyl}-L-seryl-[protein] + UDP + H(+). It carries out the reaction a 3-O-[beta-D-galactosyl-(1-&gt;3)-N-acetyl-alpha-D-galactosaminyl]-L-threonyl-[protein] + UDP-N-acetyl-alpha-D-glucosamine = a 3-O-{beta-D-galactosyl-(1-&gt;3)-[N-acetyl-beta-D-glucosaminyl-(1-&gt;6)]-N-acetyl-alpha-D-galactosaminyl}-L-threonyl-[protein] + UDP + H(+). The catalysed reaction is a globoside GalGb4Cer + UDP-N-acetyl-alpha-D-glucosamine = a globoside GlcNAc-(beta1-&gt;6)-GalGb4Cer + UDP + H(+). The enzyme catalyses a ganglioside GA1 + UDP-N-acetyl-alpha-D-glucosamine = a ganglioside beta-D-GlcNAc-(1-&gt;6)-GA1 + UDP + H(+). The protein operates within protein modification; protein glycosylation. It functions in the pathway glycolipid biosynthesis. Glycosyltransferase that catalyzes the transfer of an N-acetylglucosamine (GlcNAc) moiety in beta1-6 linkage from UDP-GlcNAc onto mucin-type core 1 O-glycan to form the branched mucin-type core 2 O-glycan. The catalysis is metal ion-independent and occurs with inversion of the anomeric configuration of sugar donor. Selectively involved in synthesis of mucin-type core 2 O-glycans that serve as scaffolds for the display of selectin ligand sialyl Lewis X epitope by myeloid cells, with an impact on homeostasis and recruitment to inflammatory sites. Can also act on glycolipid substrates. Transfers GlcNAc moiety to GalGb4Cer globosides in a reaction step to the synthesis of stage-specific embryonic antigen 1 (SSEA-1) determinant. Can use Galbeta1-3GalNAcalpha1- and Galbeta1-3GalNAcbeta1- oligosaccharide derivatives as acceptor substrates. The chain is Beta-1,3-galactosyl-O-glycosyl-glycoprotein beta-1,6-N-acetylglucosaminyltransferase (GCNT1) from Homo sapiens (Human).